Reading from the N-terminus, the 469-residue chain is 3-isopropylmalate dehydratase large subunit (469 aa).

[4Fe-4S] cluster-binding residues include C349, C410, and C413.

It belongs to the aconitase/IPM isomerase family. LeuC type 1 subfamily. In terms of assembly, heterodimer of LeuC and LeuD. The cofactor is [4Fe-4S] cluster.

It catalyses the reaction (2R,3S)-3-isopropylmalate = (2S)-2-isopropylmalate. The protein operates within amino-acid biosynthesis; L-leucine biosynthesis; L-leucine from 3-methyl-2-oxobutanoate: step 2/4. Functionally, catalyzes the isomerization between 2-isopropylmalate and 3-isopropylmalate, via the formation of 2-isopropylmaleate. The chain is 3-isopropylmalate dehydratase large subunit from Neisseria gonorrhoeae (strain NCCP11945).